The chain runs to 160 residues: UPF0225 protein CGSHiGG_04185 (160 aa).

This sequence belongs to the UPF0225 family.

This is UPF0225 protein CGSHiGG_04185 from Haemophilus influenzae (strain PittGG).